A 317-amino-acid polypeptide reads, in one-letter code: 4-hydroxy-3-methylbut-2-enyl diphosphate reductase (317 aa).

Position 12 (Cys-12) interacts with [4Fe-4S] cluster. His-41 and His-74 together coordinate (2E)-4-hydroxy-3-methylbut-2-enyl diphosphate. Dimethylallyl diphosphate is bound by residues His-41 and His-74. His-41 and His-74 together coordinate isopentenyl diphosphate. A [4Fe-4S] cluster-binding site is contributed by Cys-96. His-124 lines the (2E)-4-hydroxy-3-methylbut-2-enyl diphosphate pocket. His-124 lines the dimethylallyl diphosphate pocket. His-124 provides a ligand contact to isopentenyl diphosphate. The active-site Proton donor is the Glu-126. (2E)-4-hydroxy-3-methylbut-2-enyl diphosphate is bound at residue Thr-168. [4Fe-4S] cluster is bound at residue Cys-198. Residues Ser-226, Ser-227, Asn-228, and Ser-270 each coordinate (2E)-4-hydroxy-3-methylbut-2-enyl diphosphate. 4 residues coordinate dimethylallyl diphosphate: Ser-226, Ser-227, Asn-228, and Ser-270. 4 residues coordinate isopentenyl diphosphate: Ser-226, Ser-227, Asn-228, and Ser-270.

The protein belongs to the IspH family. Requires [4Fe-4S] cluster as cofactor.

It carries out the reaction isopentenyl diphosphate + 2 oxidized [2Fe-2S]-[ferredoxin] + H2O = (2E)-4-hydroxy-3-methylbut-2-enyl diphosphate + 2 reduced [2Fe-2S]-[ferredoxin] + 2 H(+). The catalysed reaction is dimethylallyl diphosphate + 2 oxidized [2Fe-2S]-[ferredoxin] + H2O = (2E)-4-hydroxy-3-methylbut-2-enyl diphosphate + 2 reduced [2Fe-2S]-[ferredoxin] + 2 H(+). It participates in isoprenoid biosynthesis; dimethylallyl diphosphate biosynthesis; dimethylallyl diphosphate from (2E)-4-hydroxy-3-methylbutenyl diphosphate: step 1/1. The protein operates within isoprenoid biosynthesis; isopentenyl diphosphate biosynthesis via DXP pathway; isopentenyl diphosphate from 1-deoxy-D-xylulose 5-phosphate: step 6/6. Functionally, catalyzes the conversion of 1-hydroxy-2-methyl-2-(E)-butenyl 4-diphosphate (HMBPP) into a mixture of isopentenyl diphosphate (IPP) and dimethylallyl diphosphate (DMAPP). Acts in the terminal step of the DOXP/MEP pathway for isoprenoid precursor biosynthesis. This Chromohalobacter salexigens (strain ATCC BAA-138 / DSM 3043 / CIP 106854 / NCIMB 13768 / 1H11) protein is 4-hydroxy-3-methylbut-2-enyl diphosphate reductase.